Here is a 302-residue protein sequence, read N- to C-terminus: Phosphoribosylaminoimidazole-succinocarboxamide synthase (302 aa).

The protein belongs to the SAICAR synthetase family.

It catalyses the reaction 5-amino-1-(5-phospho-D-ribosyl)imidazole-4-carboxylate + L-aspartate + ATP = (2S)-2-[5-amino-1-(5-phospho-beta-D-ribosyl)imidazole-4-carboxamido]succinate + ADP + phosphate + 2 H(+). The protein operates within purine metabolism; IMP biosynthesis via de novo pathway; 5-amino-1-(5-phospho-D-ribosyl)imidazole-4-carboxamide from 5-amino-1-(5-phospho-D-ribosyl)imidazole-4-carboxylate: step 1/2. The chain is Phosphoribosylaminoimidazole-succinocarboxamide synthase from Polaromonas sp. (strain JS666 / ATCC BAA-500).